Consider the following 208-residue polypeptide: Effector protein MavE (208 aa).

The short motif at 77-80 (NPRY) is the NPxY eukaryotic motif element. Residues 184-204 (VLFPFVAATVAVAATAASVLF) form a helical membrane-spanning segment.

In terms of assembly, homotrimer.

The protein localises to the secreted. It is found in the host vacuole. Its subcellular location is the host pathogen-containing vacuole. It localises to the host pathogen-containing vacuole membrane. Functionally, virulence effector that is indispensable for endoplasmic reticulum (ER)-mediated remodeling of the Legionella pneumophila-containing vacuole (LCV) and lysosomal evasion. Essential for intracellular replication in human monocyte-derived macrophages (hMDMs) and amoebae, as well as for intrapulmonary proliferation in mice. This Legionella pneumophila subsp. pneumophila (strain Philadelphia 1 / ATCC 33152 / DSM 7513) protein is Effector protein MavE.